Consider the following 509-residue polypeptide: Midnolin (509 aa).

Residues 1–12 (MDQHPSARSCSS) show a composition bias toward polar residues. The tract at residues 1-27 (MDQHPSARSCSSRGAAPSCESVSGEPP) is disordered. In terms of domain architecture, Ubiquitin-like spans 28 to 102 (MNLYIHSTTG…LTLVPTVEAG (75 aa)). Disordered regions lie at residues 172-295 (GSSE…NTPL), 370-404 (QCTS…ETQP), and 448-485 (KRLR…EGSL). Over residues 176–190 (GTTGLSHGASGSASG) the composition is skewed to low complexity. The span at 196–209 (HNPHPHHPHQHPHH) shows a compositional bias: basic residues. The span at 220-231 (AFPPSPSIPSIP) shows a compositional bias: pro residues. The span at 261–285 (PSSACAPSPSSPSPAASCPEASCSA) shows a compositional bias: low complexity. The segment covering 286–295 (KTSGNCNTPL) has biased composition (polar residues). Residues 376-386 (SPAPSPPPSPP) show a composition bias toward pro residues. The span at 387-400 (HTTGLTGLPTTVPS) shows a compositional bias: low complexity.

Its subcellular location is the nucleus. The protein resides in the cytoplasm. The protein localises to the cytosol. It is found in the nucleolus. Facilitates ubiquitin-independent proteasomal degradation of polycomb protein CBX4. Plays a role in inhibiting the activity of glucokinase GCK and both glucose-induced and basal insulin secretion. The protein is Midnolin (midn) of Danio rerio (Zebrafish).